We begin with the raw amino-acid sequence, 315 residues long: Probable HTH-type transcriptional regulator SinR (315 aa).

The region spanning 8–65 (RGMRDWMIFIKVAEVGNLSRAARELDISISAVSKSLSRLENSIEVTLLRRDSHHLELT) is the HTH lysR-type domain. A DNA-binding region (H-T-H motif) is located at residues 25–44 (LSRAARELDISISAVSKSLS).

The protein belongs to the LysR transcriptional regulatory family.

Probable regulatory protein. Its target is not known. The chain is Probable HTH-type transcriptional regulator SinR (sinR) from Salmonella typhimurium (strain LT2 / SGSC1412 / ATCC 700720).